A 124-amino-acid chain; its full sequence is Small ribosomal subunit protein uS12 (124 aa).

Position 89 is a 3-methylthioaspartic acid (Asp89).

It belongs to the universal ribosomal protein uS12 family. Part of the 30S ribosomal subunit. Contacts proteins S8 and S17. May interact with IF1 in the 30S initiation complex.

Its function is as follows. With S4 and S5 plays an important role in translational accuracy. Functionally, interacts with and stabilizes bases of the 16S rRNA that are involved in tRNA selection in the A site and with the mRNA backbone. Located at the interface of the 30S and 50S subunits, it traverses the body of the 30S subunit contacting proteins on the other side and probably holding the rRNA structure together. The combined cluster of proteins S8, S12 and S17 appears to hold together the shoulder and platform of the 30S subunit. In Yersinia pestis (strain Pestoides F), this protein is Small ribosomal subunit protein uS12.